A 637-amino-acid polypeptide reads, in one-letter code: Biosynthetic arginine decarboxylase (637 aa).

At lysine 101 the chain carries N6-(pyridoxal phosphate)lysine. 286 to 296 contacts substrate; it reads FDVGGGLAVDY.

It belongs to the Orn/Lys/Arg decarboxylase class-II family. SpeA subfamily. The cofactor is Mg(2+). Pyridoxal 5'-phosphate serves as cofactor.

It catalyses the reaction L-arginine + H(+) = agmatine + CO2. It participates in amine and polyamine biosynthesis; agmatine biosynthesis; agmatine from L-arginine: step 1/1. Catalyzes the biosynthesis of agmatine from arginine. This Shewanella putrefaciens (strain CN-32 / ATCC BAA-453) protein is Biosynthetic arginine decarboxylase.